Here is a 423-residue protein sequence, read N- to C-terminus: Serine--tRNA ligase 1 (423 aa).

An L-serine-binding site is contributed by 231-233 (TAE). Position 262 to 264 (262 to 264 (RSE)) interacts with ATP. L-serine is bound at residue glutamate 285. Residue 349–352 (EISS) coordinates ATP. Residue serine 384 coordinates L-serine.

It belongs to the class-II aminoacyl-tRNA synthetase family. Type-1 seryl-tRNA synthetase subfamily. As to quaternary structure, homodimer. The tRNA molecule binds across the dimer.

The protein resides in the cytoplasm. It catalyses the reaction tRNA(Ser) + L-serine + ATP = L-seryl-tRNA(Ser) + AMP + diphosphate + H(+). It carries out the reaction tRNA(Sec) + L-serine + ATP = L-seryl-tRNA(Sec) + AMP + diphosphate + H(+). It participates in aminoacyl-tRNA biosynthesis; selenocysteinyl-tRNA(Sec) biosynthesis; L-seryl-tRNA(Sec) from L-serine and tRNA(Sec): step 1/1. Its function is as follows. Catalyzes the attachment of serine to tRNA(Ser). Is also able to aminoacylate tRNA(Sec) with serine, to form the misacylated tRNA L-seryl-tRNA(Sec), which will be further converted into selenocysteinyl-tRNA(Sec). The chain is Serine--tRNA ligase 1 from Enterococcus faecalis (strain ATCC 700802 / V583).